We begin with the raw amino-acid sequence, 435 residues long: Virulence factor PIT1 (435 aa).

The next 5 membrane-spanning stretches (helical) occupy residues 33-53 (ETTT…SEVI), 77-97 (IFFI…ILVT), 111-131 (WAWT…CVIG), 143-163 (VASW…MWTN), and 204-224 (TFWF…ACCI). N330 carries N-linked (GlcNAc...) asparagine glycosylation. Polar residues predominate over residues 392 to 404 (SPQMPSKAQSQSI). The tract at residues 392 to 435 (SPQMPSKAQSQSIPYKREVEVTVDMSPVPPPPGPSPAPLPAPYM) is disordered. Positions 418–435 (PVPPPPGPSPAPLPAPYM) are enriched in pro residues.

In terms of processing, O-mannosylated by PMT4. Is also N-glycosylated.

The protein resides in the cell membrane. Its function is as follows. Plasma membrane virulence factor required for spreading and inducing tumors in infected leaves. The protein is Virulence factor PIT1 of Mycosarcoma maydis (Corn smut fungus).